Consider the following 382-residue polypeptide: Probable cytosolic iron-sulfur protein assembly protein 1 (382 aa).

WD repeat units follow at residues 9–48, 55–107, 138–178, 185–224, 231–278, 303–342, and 349–382; these read AHHD…KFPR, THTR…DNDE, GHEH…EEFE, EHQQ…DDWG, GHQG…SETN, AHTY…WEIE, and HGVH…NVWE.

The protein belongs to the WD repeat CIA1 family. In terms of assembly, interacts with NAR1.

Its subcellular location is the cytoplasm. It is found in the nucleus. In terms of biological role, essential component of the cytosolic iron-sulfur (Fe/S) protein assembly machinery. Required for the maturation of extramitochondrial Fe/S proteins. The polypeptide is Probable cytosolic iron-sulfur protein assembly protein 1 (Meyerozyma guilliermondii (strain ATCC 6260 / CBS 566 / DSM 6381 / JCM 1539 / NBRC 10279 / NRRL Y-324) (Yeast)).